The primary structure comprises 693 residues: Polyribonucleotide nucleotidyltransferase (693 aa).

Mg(2+) contacts are provided by Asp489 and Asp495. The KH domain occupies 556 to 615; it reads PQIHVMNINPAKIKDVVGRGGATVKGIVEKTGAQIDTSDSGEVKVFAKDKKSMDMAVAMI. Residues 625-693 form the S1 motif domain; that stretch reads GQVYKGKIVK…GRVKLSLVAR (69 aa).

This sequence belongs to the polyribonucleotide nucleotidyltransferase family. In terms of assembly, component of the RNA degradosome, which is a multiprotein complex involved in RNA processing and mRNA degradation. It depends on Mg(2+) as a cofactor.

The protein resides in the cytoplasm. It catalyses the reaction RNA(n+1) + phosphate = RNA(n) + a ribonucleoside 5'-diphosphate. Functionally, involved in mRNA degradation. Catalyzes the phosphorolysis of single-stranded polyribonucleotides processively in the 3'- to 5'-direction. The polypeptide is Polyribonucleotide nucleotidyltransferase (Francisella tularensis subsp. holarctica (strain FTNF002-00 / FTA)).